The following is a 130-amino-acid chain: Ribonuclease P protein component 2 (130 aa).

This sequence belongs to the eukaryotic/archaeal RNase P protein component 2 family. In terms of assembly, consists of a catalytic RNA component and at least 5 protein subunits.

The protein localises to the cytoplasm. The catalysed reaction is Endonucleolytic cleavage of RNA, removing 5'-extranucleotides from tRNA precursor.. Part of ribonuclease P, a protein complex that generates mature tRNA molecules by cleaving their 5'-ends. This Methanococcus maripaludis (strain DSM 14266 / JCM 13030 / NBRC 101832 / S2 / LL) protein is Ribonuclease P protein component 2.